A 520-amino-acid chain; its full sequence is 4-hydroxyphenylacetate 3-monooxygenase oxygenase component (520 aa).

The protein belongs to the FADH(2)-utilizing monooxygenase family. In terms of assembly, 4-HPA 3-monooxygenase consists of a reductase component HpaC and an oxygenase component HpaB.

The enzyme catalyses 4-hydroxyphenylacetate + FADH2 + O2 = 3,4-dihydroxyphenylacetate + FAD + H2O + H(+). Its pathway is aromatic compound metabolism; 4-hydroxyphenylacetate degradation; pyruvate and succinate semialdehyde from 4-hydroxyphenylacetate: step 1/7. Functionally, utilizes FADH(2) supplied by HpaC or by another flavin reductase, to catalyze the hydroxylation of 4-hydroxyphenylacetic acid, leading to the production of 3,4-DHPA. Can also oxidize phenol to catechol, and hydroxylate other phenol derivatives. The chain is 4-hydroxyphenylacetate 3-monooxygenase oxygenase component (hpaB) from Escherichia coli.